The chain runs to 686 residues: Methionine--tRNA ligase (686 aa).

The short motif at proline 15–histidine 25 is the 'HIGH' region element. Cysteine 146, cysteine 149, cysteine 159, and cysteine 162 together coordinate Zn(2+). The 'KMSKS' region signature appears at lysine 332–serine 336. Lysine 335 is a binding site for ATP. A disordered region spans residues alanine 550–glutamate 571. The tRNA-binding domain maps to alanine 585–methionine 686.

Belongs to the class-I aminoacyl-tRNA synthetase family. MetG type 1 subfamily. In terms of assembly, homodimer. The cofactor is Zn(2+).

The protein localises to the cytoplasm. It carries out the reaction tRNA(Met) + L-methionine + ATP = L-methionyl-tRNA(Met) + AMP + diphosphate. In terms of biological role, is required not only for elongation of protein synthesis but also for the initiation of all mRNA translation through initiator tRNA(fMet) aminoacylation. This Vibrio atlanticus (strain LGP32) (Vibrio splendidus (strain Mel32)) protein is Methionine--tRNA ligase.